Here is a 210-residue protein sequence, read N- to C-terminus: Synaptosomal-associated protein 25 (210 aa).

Residues 1-23 form a disordered region; sequence MENSVENSMDPRSEQEEMQRCAD. Over residues 9 to 20 the composition is skewed to basic and acidic residues; the sequence is MDPRSEQEEMQR. 2 consecutive t-SNARE coiled-coil homology domains span residues 23-85 and 147-209; these read DQIT…LSDL and DARE…ATKM.

Belongs to the SNAP-25 family.

The protein localises to the synapse. It localises to the synaptosome. The protein resides in the cell membrane. In terms of biological role, may play an important role in the synaptic function of specific neuronal systems. Associates with proteins involved in vesicle docking and membrane fusion. The polypeptide is Synaptosomal-associated protein 25 (snap25) (Torpedo marmorata (Marbled electric ray)).